Consider the following 1352-residue polypeptide: Patatin-like phospholipase domain-containing protein 7 (1352 aa).

Residues 1-36 lie on the Lumenal side of the membrane; that stretch reads MQNEEDACLEAGYCLGTTLSSWRLHFMEEQSQSTML. The helical transmembrane segment at 37–57 threads the bilayer; that stretch reads MGIGIGALLTLAFVGITFFFV. The Cytoplasmic portion of the chain corresponds to 58–1352; sequence YRRVRRLRRA…DQGPRLEHPS (1295 aa). Residue 170-297 participates in a nucleoside 3',5'-cyclic phosphate binding; sequence VLGHFEKPLF…VRVVQIIMVR (128 aa). The disordered stretch occupies residues 340-364; it reads MSYGPEEQLERSLRPSEFSSSDHGS. Residues Ser341 and Ser379 each carry the phosphoserine modification. Residues 384–411 form a disordered region; that stretch reads SNHGEVDELRQSQGSGSNTSAFQESHEG. Over residues 394-406 the composition is skewed to polar residues; that stretch reads QSQGSGSNTSAFQ. A nucleoside 3',5'-cyclic phosphate contacts are provided by residues 499 to 585 and 613 to 718; these read FLHV…YEIM and ALDW…LGEK. Positions 681-967 are involved in the binding to lipid droplets; that stretch reads VHAVRDSELA…RGCAQVGILR (287 aa). Positions 950 to 1116 constitute a PNPLA domain; sequence LVLGGGGARG…INNLPADVAR (167 aa). Residues 954 to 959 carry the GXGXXG motif; the sequence is GGGARG. A GXSXG motif is present at residues 981 to 985; it reads GTSIG. The active-site Nucleophile is Ser983. Asp1103 acts as the Proton acceptor in catalysis. Positions 1103–1105 match the DGA/G motif; the sequence is DGG. Phosphoserine is present on Ser1280. Position 1284 is a phosphothreonine (Thr1284). The interval 1295–1352 is disordered; sequence KETYADFQSTGIELDSDSEYEPSMLQGPPSLTSPEQSQDSFPWLPNQDDQGPRLEHPS. Over residues 1323–1334 the composition is skewed to polar residues; sequence PSLTSPEQSQDS.

The protein belongs to the NTE family. As to expression, expressed in white and brown adipose tissue, cardiac muscle, skeletal muscle, and testis. In terms of tissue distribution, expressed in white adipose tissue, cardiac muscle, skeletal muscle, and testis.

The protein resides in the endoplasmic reticulum membrane. It is found in the lipid droplet. The enzyme catalyses a 1-acyl-sn-glycero-3-phosphocholine + H2O = sn-glycerol 3-phosphocholine + a fatty acid + H(+). It catalyses the reaction 1-(9Z-octadecenoyl)-sn-glycero-3-phosphocholine + H2O = sn-glycerol 3-phosphocholine + (9Z)-octadecenoate + H(+). It carries out the reaction 1-(9Z-octadecenoyl)-sn-glycero-3-phosphoethanolamine + H2O = sn-glycero-3-phosphoethanolamine + (9Z)-octadecenoate + H(+). The catalysed reaction is 1-(9Z-octadecenoyl)-sn-glycero-3-phospho-L-serine + H2O = sn-glycero-3-phospho-L-serine + (9Z)-octadecenoate + H(+). The enzyme catalyses 1-hexadecanoyl-sn-glycero-3-phosphocholine + H2O = sn-glycerol 3-phosphocholine + hexadecanoate + H(+). It catalyses the reaction 1-hexadecanoyl-sn-glycero-3-phosphate + H2O = sn-glycerol 3-phosphate + hexadecanoate + H(+). CAMP does not regulate lysophospholipase activity in vitro. Slightly inhibited by organophosphorus (OP) compounds such as mipafox, which is likely why mice are less sensitive to distal axonophathy induced by OPs compared to humans. Its function is as follows. Lysophospholipase which preferentially deacylates unsaturated lysophosphatidylcholine (C18:1), generating glycerophosphocholine. Can also deacylate, to a lesser extent, lysophosphatidylethanolamine (C18:1), lysophosphatidyl-L-serine (C18:1) and lysophosphatidic acid (C16:0). Functionally, lysophospholipase. Lacks lysophospholipase activity. The sequence is that of Patatin-like phospholipase domain-containing protein 7 (Pnpla7) from Mus musculus (Mouse).